We begin with the raw amino-acid sequence, 545 residues long: Intercellular adhesion molecule 1 (545 aa).

The N-terminal stretch at 1–27 (MASTRARPMLPLLLVLVAVVIPGPVGA) is a signal peptide. Over 28–492 (QVSIHPTEAF…HLTVLYHDQN (465 aa)) the chain is Extracellular. Ig-like C2-type domains lie at 41–103 (GGSV…QSSA) and 128–193 (GKNL…LDLR). Residue asparagine 47 is glycosylated (N-linked (GlcNAc...) asparagine). Disulfide bonds link cysteine 48–cysteine 92, cysteine 52–cysteine 96, and cysteine 135–cysteine 186. The N-linked (GlcNAc...) asparagine glycan is linked to asparagine 154. Positions 177–179 (RGD) match the Cell attachment site motif. N-linked (GlcNAc...) asparagine glycosylation is found at asparagine 183 and asparagine 202. One can recognise an Ig-like C2-type 3 domain in the interval 230–297 (GTQQKFLCSL…LRCVLELADQ (68 aa)). A disulfide bond links cysteine 237 and cysteine 290. Residues asparagine 309, asparagine 344, asparagine 396, asparagine 417, asparagine 439, and asparagine 464 are each glycosylated (N-linked (GlcNAc...) asparagine). One can recognise an Ig-like C2-type 4 domain in the interval 325–389 (GDQVTVKCEA…FFCSAALEVD (65 aa)). A disulfide bond links cysteine 332 and cysteine 382. The disordered stretch occupies residues 343-365 (LNSTSPRPPTSQGTSPRPPTSQI). Intrachain disulfides connect cysteine 414-cysteine 430, cysteine 430-cysteine 469, and cysteine 442-cysteine 469. One can recognise an Ig-like C2-type 5 domain in the interval 423–476 (GSQQTLTCQPQGNPAPNLTCSRKADGVPLPIGMVKSVKREMNGTYKCRAFSSRG). The helical transmembrane segment at 493 to 517 (TWVIIVGVLVLIIAGFVIVASIYTY) threads the bilayer. Residues 518-545 (YRQRKIRIYKLQKAQEEALKLKVQAPPP) are Cytoplasmic-facing.

This sequence belongs to the immunoglobulin superfamily. ICAM family. As to quaternary structure, homodimer. Interacts with MUC1 and promotes cell aggregation in epithelial cells. Interacts with ARHGEF26/SGEF. Interacts (on T cell side) with CD81, CD247 and CD9 at immunological synapses between antigen-presenting cells and T cells. Monoubiquitinated, which is promoted by MARCH9 and leads to endocytosis.

It localises to the membrane. Functionally, ICAM proteins are ligands for the leukocyte adhesion protein LFA-1 (integrin alpha-L/beta-2). During leukocyte trans-endothelial migration, ICAM1 engagement promotes the assembly of endothelial apical cups through ARHGEF26/SGEF and RHOG activation. The protein is Intercellular adhesion molecule 1 (Icam1) of Rattus norvegicus (Rat).